The sequence spans 128 residues: MLIFLEVKYMNFHNRKLDEELIDYNISLRILFTILSVAIIMVAFDSLGSSVSDPVGDALCKLIKVFRGNTAKGIAVVGIIVLGIQTLRGKLQWEVALVVVTAIIILFKAPDIVNMVSSDNNSSSCGVS.

The next 3 membrane-spanning stretches (helical) occupy residues 30–50, 65–85, and 93–113; these read ILFTILSVAIIMVAFDSLGSS, VFRGNTAKGIAVVGIIVLGIQ, and WEVALVVVTAIIILFKAPDIV.

The protein resides in the cell membrane. This is an uncharacterized protein from Rickettsia prowazekii (strain Madrid E).